The chain runs to 81 residues: Photosystem I iron-sulfur center (81 aa).

4Fe-4S ferredoxin-type domains are found at residues serine 2–tryptophan 31 and isoleucine 39–tyrosine 68. Cysteine 11, cysteine 14, cysteine 17, cysteine 21, cysteine 48, cysteine 51, cysteine 54, and cysteine 58 together coordinate [4Fe-4S] cluster.

As to quaternary structure, the eukaryotic PSI reaction center is composed of at least 11 subunits. The cofactor is [4Fe-4S] cluster.

It is found in the plastid. The protein resides in the chloroplast thylakoid membrane. It carries out the reaction reduced [plastocyanin] + hnu + oxidized [2Fe-2S]-[ferredoxin] = oxidized [plastocyanin] + reduced [2Fe-2S]-[ferredoxin]. Functionally, apoprotein for the two 4Fe-4S centers FA and FB of photosystem I (PSI); essential for photochemical activity. FB is the terminal electron acceptor of PSI, donating electrons to ferredoxin. The C-terminus interacts with PsaA/B/D and helps assemble the protein into the PSI complex. Required for binding of PsaD and PsaE to PSI. PSI is a plastocyanin-ferredoxin oxidoreductase, converting photonic excitation into a charge separation, which transfers an electron from the donor P700 chlorophyll pair to the spectroscopically characterized acceptors A0, A1, FX, FA and FB in turn. The polypeptide is Photosystem I iron-sulfur center (Vitis vinifera (Grape)).